A 422-amino-acid chain; its full sequence is Glyceraldehyde-3-phosphate dehydrogenase GAPCP1, chloroplastic (422 aa).

Residues 1-69 constitute a chloroplast transit peptide; that stretch reads MAFSSLLRSA…NARSVQPIKA (69 aa). Over residues 50 to 63 the composition is skewed to polar residues; sequence SGISSSLQNGNARS. The interval 50–84 is disordered; it reads SGISSSLQNGNARSVQPIKATATEVPSAVRRSSSS. At Thr-70 the chain carries N-acetylthreonine. NAD(+) contacts are provided by residues 96–97, Asp-118, and Arg-164; that span reads RI. D-glyceraldehyde 3-phosphate-binding positions include 235–237, Thr-266, 295–296, and Arg-318; these read SCT and TG. Residue Cys-236 is the Nucleophile of the active site. Residue Asn-400 coordinates NAD(+).

The protein belongs to the glyceraldehyde-3-phosphate dehydrogenase family. In terms of assembly, homotetramer. As to expression, expressed in shoot and root vasculature, leaf veins and vascular tissue of flowers and siliques.

Its subcellular location is the plastid. The protein localises to the chloroplast stroma. The enzyme catalyses D-glyceraldehyde 3-phosphate + phosphate + NAD(+) = (2R)-3-phospho-glyceroyl phosphate + NADH + H(+). Involved in plastidial glycolytic pathway and plays a specific role in glycolytic energy production in non-green plastids and chloroplasts. Essential for breakdown of starch to form sucrose for export to non-photosynthetic tissues, and to generate primary metabolites for anabolic pathways such as fatty acid and amino acid synthesis. Plays an important role in plant development by providing substrates for the phosphorylated pathway of serine biosynthesis in roots. Plays a crucial role in pollen development. Functionally redundant with GAPCP2. The chain is Glyceraldehyde-3-phosphate dehydrogenase GAPCP1, chloroplastic (GAPCP1) from Arabidopsis thaliana (Mouse-ear cress).